A 116-amino-acid chain; its full sequence is Ferredoxin-like protein in nif region (116 aa).

A 4Fe-4S ferredoxin-type domain is found at 2 to 29 (AYTITSQCISCKLCSSVCPTGAIKIAEN). 4 residues coordinate iron-sulfur cluster: Cys-9, Cys-12, Cys-15, and Cys-19.

This chain is Ferredoxin-like protein in nif region (fdxN), found in Nostoc sp. (strain PCC 7120 / SAG 25.82 / UTEX 2576).